A 215-amino-acid chain; its full sequence is Pyrophosphatase PpaX (215 aa).

The active-site Nucleophile is aspartate 9.

This sequence belongs to the HAD-like hydrolase superfamily. PpaX family. It depends on Mg(2+) as a cofactor.

It carries out the reaction diphosphate + H2O = 2 phosphate + H(+). Its function is as follows. Hydrolyzes pyrophosphate formed during P-Ser-HPr dephosphorylation by HPrK/P. Might play a role in controlling the intracellular pyrophosphate pool. The sequence is that of Pyrophosphatase PpaX from Anoxybacillus flavithermus (strain DSM 21510 / WK1).